The following is a 742-amino-acid chain: Two pore calcium channel protein 1 (742 aa).

Residues 1–37 (MSEAEAPLITEEAAERGLASSGSRRLSDGAGGQGSRK) form a disordered region. Residues 1–82 (MSEAEAPLIT…NDTRFGRAMS (82 aa)) are Cytoplasmic-facing. The chain crosses the membrane as a helical span at residues 83-103 (FYFVYLRLDWLWSLNLFALIL). The Extracellular segment spans residues 104 to 140 (LNFLEKPLWCRKDALQAYDQRDLYFLGQLPYFSKTES). The helical transmembrane segment at 141 to 161 (LIYEGLTLVILVMDIFCPLSY) threads the bilayer. The Cytoplasmic segment spans residues 162–176 (EGLNIFWRSTTNKLK). Residues 177–197 (IVLLFILACDILVFAFSSQPF) traverse the membrane as a helical segment. Topologically, residues 198-204 (RLAPYIR) are extracellular. The helical; Voltage-sensor transmembrane segment at 205–226 (VVFLIMTIRELRMCAITLAGLI) threads the bilayer. The helical transmembrane segment at 227 to 247 (GTYLNVLALSLLFLLFASWLA) threads the bilayer. The Extracellular segment spans residues 248 to 258 (YVTFEDTPQGK). The segment at residues 259–273 (TIFSSYGVTLYQMFV) is an intramembrane region (pore-forming). Residues 274 to 296 (LFTTSNNPDVWVHAYKIPRWYSL) are Extracellular-facing. Residues 297-317 (FFIVYVLLGVYFLTNLILAVI) form a helical membrane-spanning segment. Residues 318–446 (YDSFKEQFAK…SFVRSRMFEY (129 aa)) lie on the Cytoplasmic side of the membrane. EF-hand domains lie at 335–370 (IRKN…LNKY) and 376–411 (TSRE…IAIK). A helical transmembrane segment spans residues 447 to 467 (IIVFVLLINLVAVIIETTLDI). Residues 468 to 480 (ENSSSQETWQEVE) are Extracellular-facing. A glycan (N-linked (GlcNAc...) asparagine) is linked at Asn-469. Residues 481-501 (FFLGWIYVAEMALKIFSLGFG) traverse the membrane as a helical segment. The Cytoplasmic segment spans residues 502–510 (AYWMEGQNK). A helical membrane pass occupies residues 511–531 (FDFVLTWTIFIGETLTFAFPS). At 532–540 (KLPFLSNGE) the chain is on the extracellular side. The helical; Voltage-sensor transmembrane segment at 541-558 (WIRYLLLGRVLRLTRILL) threads the bilayer. At 559–582 (QVQRFRAFVATFFTLMSSLMPYLG) the chain is on the cytoplasmic side. Residues 583 to 603 (IVFCVLCMYCSIGLQIFGGIV) traverse the membrane as a helical segment. Over 604 to 627 (YAGNPTLEETDLFNNDYLLFNFND) the chain is Extracellular. The segment at residues 628-642 (YPSGMVTLFNLLVMG) is an intramembrane region (pore-forming). The Extracellular portion of the chain corresponds to 643–663 (NWQVWMESYWQLTGTSWSLIY). Residues 664 to 684 (FVSFYLISILLLLNLIVAFVL) form a helical membrane-spanning segment. Over 685 to 742 (EAFFAEMELEKGEEVDIQNPTSGGIKKRRSMRVRSKGTMVDILLHHMLSNELDGSQNS) the chain is Cytoplasmic.

It belongs to the calcium channel alpha-1 subunit (TC 1.A.1.11) family. Two pore calcium channel subfamily. As to quaternary structure, homodimer.

It is found in the membrane. With respect to regulation, inhibited by Al(3+). In terms of biological role, functions as a voltage-gated inward-rectifying Ca(2+) channel (VDCC) across the plasma membrane that mediates sucrose-induced Ca(2+) influx in autotrophically grown leaf cells. Acts as the major ROS-responsive Ca(2+) channel and is the possible target of Al-dependent inhibition. Plays a regulatory role in defense responses. The chain is Two pore calcium channel protein 1 (TPC1) from Triticum aestivum (Wheat).